A 320-amino-acid polypeptide reads, in one-letter code: tRNA pseudouridine synthase B (320 aa).

Asp-49 (nucleophile) is an active-site residue.

Belongs to the pseudouridine synthase TruB family. Type 1 subfamily.

It catalyses the reaction uridine(55) in tRNA = pseudouridine(55) in tRNA. Responsible for synthesis of pseudouridine from uracil-55 in the psi GC loop of transfer RNAs. The protein is tRNA pseudouridine synthase B of Bartonella bacilliformis (strain ATCC 35685 / KC583 / Herrer 020/F12,63).